Here is a 528-residue protein sequence, read N- to C-terminus: Phosphoenolpyruvate carboxykinase (ATP) (528 aa).

3 residues coordinate substrate: Arg-56, Tyr-192, and Lys-198. ATP is bound by residues Lys-198, His-217, and 233-241 (GLSGTGKTT). Lys-198 and His-217 together coordinate Mn(2+). Asp-254 is a binding site for Mn(2+). ATP contacts are provided by Glu-282, Arg-319, and Thr-444. Substrate is bound at residue Arg-319.

The protein belongs to the phosphoenolpyruvate carboxykinase (ATP) family. Mn(2+) is required as a cofactor.

The protein resides in the cytoplasm. The catalysed reaction is oxaloacetate + ATP = phosphoenolpyruvate + ADP + CO2. It functions in the pathway carbohydrate biosynthesis; gluconeogenesis. Involved in the gluconeogenesis. Catalyzes the conversion of oxaloacetate (OAA) to phosphoenolpyruvate (PEP) through direct phosphoryl transfer between the nucleoside triphosphate and OAA. The chain is Phosphoenolpyruvate carboxykinase (ATP) from Bacillus cereus (strain AH187).